The sequence spans 130 residues: Small ribosomal subunit protein uS11 (130 aa).

This sequence belongs to the universal ribosomal protein uS11 family. Part of the 30S ribosomal subunit. Interacts with proteins S7 and S18. Binds to IF-3.

Functionally, located on the platform of the 30S subunit, it bridges several disparate RNA helices of the 16S rRNA. Forms part of the Shine-Dalgarno cleft in the 70S ribosome. The chain is Small ribosomal subunit protein uS11 from Nautilia profundicola (strain ATCC BAA-1463 / DSM 18972 / AmH).